A 113-amino-acid polypeptide reads, in one-letter code: Nucleoid-associated protein ROP_41370 (113 aa).

It belongs to the YbaB/EbfC family. Homodimer.

The protein localises to the cytoplasm. Its subcellular location is the nucleoid. Its function is as follows. Binds to DNA and alters its conformation. May be involved in regulation of gene expression, nucleoid organization and DNA protection. The sequence is that of Nucleoid-associated protein ROP_41370 from Rhodococcus opacus (strain B4).